Here is a 245-residue protein sequence, read N- to C-terminus: Chromosome partition protein MukE (245 aa).

The tract at residues 213–245 (PESIAAEKATADDESAVSNEEDFEYDDNQEGAE) is disordered. The segment covering 224-245 (DDESAVSNEEDFEYDDNQEGAE) has biased composition (acidic residues).

This sequence belongs to the MukE family. In terms of assembly, interacts, and probably forms a ternary complex, with MukF and MukB. The complex formation is stimulated by calcium or magnesium.

The protein localises to the cytoplasm. Its subcellular location is the nucleoid. Its function is as follows. Involved in chromosome condensation, segregation and cell cycle progression. May participate in facilitating chromosome segregation by condensation DNA from both sides of a centrally located replisome during cell division. Probably acts via its interaction with MukB and MukF. This is Chromosome partition protein MukE from Actinobacillus succinogenes (strain ATCC 55618 / DSM 22257 / CCUG 43843 / 130Z).